The chain runs to 335 residues: Serpentine receptor class XA 10 (335 aa).

The Extracellular portion of the chain corresponds to 1-10; the sequence is MDVDAAVVKR. A helical transmembrane segment spans residues 11–31; it reads IALWVYETCSVFNLFYCITLS. Over 32 to 46 the chain is Cytoplasmic; the sequence is LAIKTSKNNALPATY. A helical transmembrane segment spans residues 47–67; sequence IYNMAISNALLVIFGIMVYIL. The Extracellular segment spans residues 68 to 82; that stretch reads PYYMSDKTYKTYRDS. The helical transmembrane segment at 83 to 103 threads the bilayer; it reads IGAMISVGVTFNYLHPMLTLI. Topologically, residues 104 to 126 are cytoplasmic; the sequence is LMTINRIAVVVSMQASQLFTSSK. The helical transmembrane segment at 127-147 threads the bilayer; sequence IWLYTSFHMTANFACLIIPYL. Residues 148 to 177 lie on the Extracellular side of the membrane; that stretch reads SECRINYDIRKVGFISECAPDRHQITTFSN. The helical transmembrane segment at 178–198 threads the bilayer; sequence YYSVFFPFVAFFFNVLVIINF. Residues 199-238 are Cytoplasmic-facing; the sequence is KLQRSPTYTKIKNMFRRGNGDQFTSMPSDVLKAKKKTERM. Residues 239–259 form a helical membrane-spanning segment; the sequence is LMIQAFITAFYLSVYELTSLV. The Extracellular portion of the chain corresponds to 260-276; it reads LRVVPELFGNLSLDGKL. Residues 277–297 form a helical membrane-spanning segment; the sequence is AFTYFRLAQVPCHVFLVYFIF. The Cytoplasmic segment spans residues 298–319; it reads TPVTRKIYMDFVRERVFCMKPA.

It belongs to the nematode receptor-like protein srxa family.

It localises to the membrane. This chain is Serpentine receptor class XA 10 (srxa-10), found in Caenorhabditis elegans.